The chain runs to 283 residues: MAAITAALIKQVREDTGAGMLDVKKALTEAEGDVARAKEIIRAKGIAAAGKREGRKAQEGTIASKVVETANGETGYAVELNSETDFVAKTPKFVEFSEEVLGYAVDAEANSADELLEAKAGDSTVKLAVEEAAALFGEHVKVGQFAKISGEHVEVYAHKKSAEMPPSIVAMIATDKAGAAVAHEAALQISAMGAKWLTREDVPADVVESERRVATEKSLAEGKPEKIVPKIVEGRLNAFFKEVVLLEQPFVKDPSKTVGDLFKEVGGAATAFARVEVGKGEEE.

The segment at 84 to 87 is involved in Mg(2+) ion dislocation from EF-Tu; the sequence is TDFV.

This sequence belongs to the EF-Ts family.

The protein resides in the cytoplasm. Associates with the EF-Tu.GDP complex and induces the exchange of GDP to GTP. It remains bound to the aminoacyl-tRNA.EF-Tu.GTP complex up to the GTP hydrolysis stage on the ribosome. This Bifidobacterium longum subsp. infantis (strain ATCC 15697 / DSM 20088 / JCM 1222 / NCTC 11817 / S12) protein is Elongation factor Ts.